Consider the following 343-residue polypeptide: L-ornithine/L-arginine 3-hydroxylase (343 aa).

Positions 147 and 149 each coordinate Fe cation. Over residues 199–215 the composition is skewed to polar residues; that stretch reads MPDNSHLPQNTAESTGD. The segment at 199 to 218 is disordered; sequence MPDNSHLPQNTAESTGDPTK. His302 contributes to the Fe cation binding site. Arg316 serves as a coordination point for 2-oxoglutarate.

The protein belongs to the clavaminate synthase family. Requires Fe(2+) as cofactor.

It catalyses the reaction L-ornithine + 2-oxoglutarate + O2 = (3S)-3-hydroxy-L-ornithine + succinate + CO2. The catalysed reaction is L-arginine + 2-oxoglutarate + O2 = (2S,3S)-hydroxyarginine + succinate + CO2. In terms of biological role, alpha-ketoglutarate-dependent dioxygenase that in vitro catalyzes the regio- and stereoselective hydroxylation of L-ornithine and L-arginine, leading to (3S)-3-hydroxy-L-ornithine and (3S)-3-hydroxy-L-arginine, respectively. Cannot use L-lysine, D-ornithine, or D-arginine as substrate. This chain is L-ornithine/L-arginine 3-hydroxylase, found in Catenulispora acidiphila (strain DSM 44928 / JCM 14897 / NBRC 102108 / NRRL B-24433 / ID139908).